Here is a 566-residue protein sequence, read N- to C-terminus: Peroxisomal leader peptide-processing protease (566 aa).

The tract at residues 319-531 (ALAALLPPEV…LQPALQQYSQ (213 aa)) is serine protease. Active-site charge relay system residues include histidine 372, aspartate 408, and serine 481.

The protein belongs to the peptidase S1B family. Homodimer. Forms a heterodimer with the C-terminal cleavage product (45 kDa form). Forms a heterodimer with the N-terminal cleavage product (15 kDa form). Interacts with PEX5. Interacts with LONP2. Self-cleavage gives rise to an N-terminal 15-kDa fragment and C-terminal 45-kDa fragment upon import into the peroxisomes. The full-lengh TYSND1 is the active the proteolytic processing of PTS1- and PTS2-proteins and in self-cleavage, and intermolecular self-cleavage of TYSND1 down-regulates its protease activity.

Its subcellular location is the peroxisome. Its function is as follows. Peroxisomal protease that mediates both the removal of the leader peptide from proteins containing a PTS2 target sequence and processes several PTS1-containing proteins. Catalyzes the processing of PTS1-proteins involved in the peroxisomal beta-oxidation of fatty acids. This Homo sapiens (Human) protein is Peroxisomal leader peptide-processing protease (TYSND1).